Consider the following 184-residue polypeptide: Ribosome-recycling factor (184 aa).

This sequence belongs to the RRF family.

The protein resides in the cytoplasm. Functionally, responsible for the release of ribosomes from messenger RNA at the termination of protein biosynthesis. May increase the efficiency of translation by recycling ribosomes from one round of translation to another. The sequence is that of Ribosome-recycling factor from Acholeplasma laidlawii (strain PG-8A).